Here is a 79-residue protein sequence, read N- to C-terminus: Anti-insect Ac4 (79 aa).

The N-terminal stretch at 1-17 (MISLSLLLMIGVESVRD) is a signal peptide. The 60-residue stretch at 18–77 (GYIVDFKNCVYRCVPPCDGLCKKNGGKGGSCSFLIGSGLACWCNALPDNVPIKDPLHKCP) folds into the LCN-type CS-alpha/beta domain. Intrachain disulfides connect Cys-26/Cys-76, Cys-30/Cys-48, Cys-34/Cys-58, and Cys-38/Cys-60.

It belongs to the long (4 C-C) scorpion toxin superfamily. Sodium channel inhibitor family. Alpha subfamily. As to expression, expressed by the venom gland.

The protein localises to the secreted. In terms of biological role, alpha toxins bind voltage-independently at site-3 of sodium channels (Nav) and inhibit the inactivation of the activated channels, thereby blocking neuronal transmission. This protein is weakly toxic against insects (ED(50)&gt;2 ug per 100 mg of blowfly larvae), but is inactive against mammalian sodium channels (rNav1.2a, and rNav1.4). This chain is Anti-insect Ac4, found in Androctonus crassicauda (Arabian fat-tailed scorpion).